Here is a 135-residue protein sequence, read N- to C-terminus: Probable transporter XF_0766 (135 aa).

Transmembrane regions (helical) follow at residues 4 to 24 (YWYPILGGILLGLSTVMLLLL), 45 to 65 (AQDIPFVVGLVLGPLVFSVIF), 71 to 91 (VTVAATWPTIIVAGLLVGLGT), and 114 to 134 (IVATAIFLISGMATATFMGVY).

The protein belongs to the TsuA/YedE (TC 9.B.102) family.

The protein localises to the cell inner membrane. The chain is Probable transporter XF_0766 from Xylella fastidiosa (strain 9a5c).